A 232-amino-acid polypeptide reads, in one-letter code: Large ribosomal subunit protein uL1 (232 aa).

This sequence belongs to the universal ribosomal protein uL1 family. In terms of assembly, part of the 50S ribosomal subunit.

Binds directly to 23S rRNA. The L1 stalk is quite mobile in the ribosome, and is involved in E site tRNA release. Functionally, protein L1 is also a translational repressor protein, it controls the translation of the L11 operon by binding to its mRNA. This chain is Large ribosomal subunit protein uL1, found in Liberibacter asiaticus (Citrus greening disease).